The chain runs to 351 residues: Dihydroorotate dehydrogenase (quinone) (351 aa).

FMN contacts are provided by residues 67–71 and Thr91; that span reads AGFDK. Substrate is bound at residue Lys71. 116-120 is a binding site for substrate; the sequence is NAMGF. FMN contacts are provided by Asn145 and Asn178. Residue Asn178 participates in substrate binding. Ser181 serves as the catalytic Nucleophile. Substrate is bound at residue Asn183. Residues Lys214 and Thr242 each contribute to the FMN site. 243-244 lines the substrate pocket; it reads NT. FMN-binding positions include Gly262, Gly291, and 312 to 313; that span reads YT.

This sequence belongs to the dihydroorotate dehydrogenase family. Type 2 subfamily. As to quaternary structure, monomer. The cofactor is FMN.

The protein resides in the cell membrane. The enzyme catalyses (S)-dihydroorotate + a quinone = orotate + a quinol. Its pathway is pyrimidine metabolism; UMP biosynthesis via de novo pathway; orotate from (S)-dihydroorotate (quinone route): step 1/1. In terms of biological role, catalyzes the conversion of dihydroorotate to orotate with quinone as electron acceptor. In Nitratiruptor sp. (strain SB155-2), this protein is Dihydroorotate dehydrogenase (quinone).